A 284-amino-acid chain; its full sequence is NH(3)-dependent NAD(+) synthetase (284 aa).

Position 41–48 (41–48 (GLSGGVDS)) interacts with ATP. Position 47 (aspartate 47) interacts with Mg(2+). Position 127 (arginine 127) interacts with deamido-NAD(+). Threonine 147 is a binding site for ATP. Position 152 (glutamate 152) interacts with Mg(2+). Aspartate 167 lines the deamido-NAD(+) pocket. ATP-binding residues include lysine 176 and serine 199. The disordered stretch occupies residues 264 to 284 (FKRRPAPGLDLPEPEDPAMSG). Over residues 275 to 284 (PEPEDPAMSG) the composition is skewed to acidic residues.

This sequence belongs to the NAD synthetase family. Homodimer.

It catalyses the reaction deamido-NAD(+) + NH4(+) + ATP = AMP + diphosphate + NAD(+) + H(+). It functions in the pathway cofactor biosynthesis; NAD(+) biosynthesis; NAD(+) from deamido-NAD(+) (ammonia route): step 1/1. In terms of biological role, catalyzes the ATP-dependent amidation of deamido-NAD to form NAD. Uses ammonia as a nitrogen source. This chain is NH(3)-dependent NAD(+) synthetase, found in Methanopyrus kandleri (strain AV19 / DSM 6324 / JCM 9639 / NBRC 100938).